A 376-amino-acid polypeptide reads, in one-letter code: Heterodimeric geranylgeranyl pyrophosphate synthase large subunit 2 (376 aa).

A signal peptide spans 1–24; it reads MEPQILFLYLSLFILSLNFFFTNL. Residues Lys-125, Arg-128, and His-157 each contribute to the isopentenyl diphosphate site. The Mg(2+) site is built by Asp-164 and Asp-170. Arg-175 serves as a coordination point for dimethylallyl diphosphate. Arg-176 contributes to the isopentenyl diphosphate binding site. The dimethylallyl diphosphate site is built by Lys-261, Thr-262, Gln-299, Lys-316, and Lys-326.

The protein belongs to the FPP/GGPP synthase family. In terms of assembly, monomer. Part of a heterodimeric geranyl(geranyl)diphosphate synthase. Interacts with GGR. Mg(2+) serves as cofactor. As to expression, mainly expressed in flowers.

It is found in the endoplasmic reticulum. It carries out the reaction isopentenyl diphosphate + dimethylallyl diphosphate = (2E)-geranyl diphosphate + diphosphate. The catalysed reaction is isopentenyl diphosphate + (2E)-geranyl diphosphate = (2E,6E)-farnesyl diphosphate + diphosphate. The enzyme catalyses isopentenyl diphosphate + (2E,6E)-farnesyl diphosphate = (2E,6E,10E)-geranylgeranyl diphosphate + diphosphate. It functions in the pathway isoprenoid biosynthesis; farnesyl diphosphate biosynthesis; farnesyl diphosphate from geranyl diphosphate and isopentenyl diphosphate: step 1/1. Its pathway is isoprenoid biosynthesis; geranyl diphosphate biosynthesis; geranyl diphosphate from dimethylallyl diphosphate and isopentenyl diphosphate: step 1/1. It participates in isoprenoid biosynthesis; geranylgeranyl diphosphate biosynthesis; geranylgeranyl diphosphate from farnesyl diphosphate and isopentenyl diphosphate: step 1/1. In terms of biological role, heterodimeric geranyl(geranyl)-diphosphate (GPP) synthase large subunit. In vitro, the large subunit catalyzes mainly the trans-addition of the three molecules of IPP onto DMAPP to form geranylgeranyl pyrophosphate while the small subunit alone is inactive. Upon association of the two subunits, the product profile is not changed. In Arabidopsis thaliana (Mouse-ear cress), this protein is Heterodimeric geranylgeranyl pyrophosphate synthase large subunit 2 (GGPPS2).